A 232-amino-acid chain; its full sequence is RNA chaperone ProQ (232 aa).

A disordered region spans residues 105–182 (EAKARVQAQR…REEQHTPVSD (78 aa)). The segment covering 117–136 (QQAKKREAAAAAGEKEDAPR) has biased composition (basic and acidic residues). Basic residues predominate over residues 137–146 (RERKPRPTTP). Residues 147–177 (RRKEGAERKPRAQKPVEKAPKTVKAPREEQH) are compositionally biased toward basic and acidic residues.

Belongs to the ProQ family.

The protein localises to the cytoplasm. Functionally, RNA chaperone with significant RNA binding, RNA strand exchange and RNA duplexing activities. May regulate ProP activity through an RNA-based, post-transcriptional mechanism. This chain is RNA chaperone ProQ, found in Escherichia coli (strain ATCC 8739 / DSM 1576 / NBRC 3972 / NCIMB 8545 / WDCM 00012 / Crooks).